Reading from the N-terminus, the 179-residue chain is Large ribosomal subunit protein uL5 (179 aa).

The protein belongs to the universal ribosomal protein uL5 family. Part of the 50S ribosomal subunit; part of the 5S rRNA/L5/L18/L25 subcomplex. Contacts the 5S rRNA and the P site tRNA. Forms a bridge to the 30S subunit in the 70S ribosome.

Functionally, this is one of the proteins that bind and probably mediate the attachment of the 5S RNA into the large ribosomal subunit, where it forms part of the central protuberance. In the 70S ribosome it contacts protein S13 of the 30S subunit (bridge B1b), connecting the 2 subunits; this bridge is implicated in subunit movement. Contacts the P site tRNA; the 5S rRNA and some of its associated proteins might help stabilize positioning of ribosome-bound tRNAs. The chain is Large ribosomal subunit protein uL5 from Vibrio atlanticus (strain LGP32) (Vibrio splendidus (strain Mel32)).